We begin with the raw amino-acid sequence, 760 residues long: Endoplasmin homolog (760 aa).

Residues 1-23 form the signal peptide; sequence MRFLLVGFVALLAVSAFIPNVYA. Asn-95, Asp-137, Asn-150, and Phe-187 together coordinate ATP. N-linked (GlcNAc...) asparagine glycosylation occurs at Asn-95. Asn-423 carries N-linked (GlcNAc...) asparagine glycosylation. The disordered stretch occupies residues 727-760; it reads SQDAQVETEQHIEEAEPEPEAAEETTIEEEHSEL. The span at 741–760 shows a compositional bias: acidic residues; it reads AEPEPEAAEETTIEEEHSEL. Residues 757-760 carry the Prevents secretion from ER motif; it reads HSEL.

The protein belongs to the heat shock protein 90 family.

Its subcellular location is the endoplasmic reticulum lumen. Molecular chaperone that functions in the processing and transport of secreted proteins. The sequence is that of Endoplasmin homolog from Caenorhabditis elegans.